A 319-amino-acid chain; its full sequence is Putative metal ion transporter YfjQ (319 aa).

2 helical membrane passes run 254-274 (IMMTLTIVSTIFIPLTFIAGV) and 290-310 (GYFAVLGLMAALVIGMLIWFV).

The protein belongs to the CorA metal ion transporter (MIT) (TC 1.A.35) family.

Its subcellular location is the cell membrane. This chain is Putative metal ion transporter YfjQ (yfjQ), found in Bacillus subtilis (strain 168).